The chain runs to 346 residues: 3-dehydroquinate synthase (346 aa).

Residues 61-66 (DGEAYK), 95-99 (GVIGD), 119-120 (TT), K132, and K141 each bind NAD(+). 3 residues coordinate Zn(2+): E174, H233, and H250.

It belongs to the sugar phosphate cyclases superfamily. Dehydroquinate synthase family. The cofactor is NAD(+). Co(2+) is required as a cofactor. Zn(2+) serves as cofactor.

It localises to the cytoplasm. The enzyme catalyses 7-phospho-2-dehydro-3-deoxy-D-arabino-heptonate = 3-dehydroquinate + phosphate. Its pathway is metabolic intermediate biosynthesis; chorismate biosynthesis; chorismate from D-erythrose 4-phosphate and phosphoenolpyruvate: step 2/7. Catalyzes the conversion of 3-deoxy-D-arabino-heptulosonate 7-phosphate (DAHP) to dehydroquinate (DHQ). This is 3-dehydroquinate synthase from Wolinella succinogenes (strain ATCC 29543 / DSM 1740 / CCUG 13145 / JCM 31913 / LMG 7466 / NCTC 11488 / FDC 602W) (Vibrio succinogenes).